We begin with the raw amino-acid sequence, 424 residues long: Histidine--tRNA ligase (424 aa).

The protein belongs to the class-II aminoacyl-tRNA synthetase family. In terms of assembly, homodimer.

It localises to the cytoplasm. The enzyme catalyses tRNA(His) + L-histidine + ATP = L-histidyl-tRNA(His) + AMP + diphosphate + H(+). The polypeptide is Histidine--tRNA ligase (Klebsiella pneumoniae (strain 342)).